The following is a 180-amino-acid chain: Crossover junction endodeoxyribonuclease RuvC (180 aa).

Catalysis depends on residues Asp-7, Glu-66, and Asp-138. Mg(2+) contacts are provided by Asp-7, Glu-66, and Asp-138.

It belongs to the RuvC family. In terms of assembly, homodimer which binds Holliday junction (HJ) DNA. The HJ becomes 2-fold symmetrical on binding to RuvC with unstacked arms; it has a different conformation from HJ DNA in complex with RuvA. In the full resolvosome a probable DNA-RuvA(4)-RuvB(12)-RuvC(2) complex forms which resolves the HJ. Mg(2+) is required as a cofactor.

The protein resides in the cytoplasm. It catalyses the reaction Endonucleolytic cleavage at a junction such as a reciprocal single-stranded crossover between two homologous DNA duplexes (Holliday junction).. Its function is as follows. The RuvA-RuvB-RuvC complex processes Holliday junction (HJ) DNA during genetic recombination and DNA repair. Endonuclease that resolves HJ intermediates. Cleaves cruciform DNA by making single-stranded nicks across the HJ at symmetrical positions within the homologous arms, yielding a 5'-phosphate and a 3'-hydroxyl group; requires a central core of homology in the junction. The consensus cleavage sequence is 5'-(A/T)TT(C/G)-3'. Cleavage occurs on the 3'-side of the TT dinucleotide at the point of strand exchange. HJ branch migration catalyzed by RuvA-RuvB allows RuvC to scan DNA until it finds its consensus sequence, where it cleaves and resolves the cruciform DNA. This chain is Crossover junction endodeoxyribonuclease RuvC, found in Burkholderia orbicola (strain AU 1054).